Consider the following 157-residue polypeptide: Transcription elongation factor GreA (157 aa).

A coiled-coil region spans residues T10–K76.

Belongs to the GreA/GreB family.

Its function is as follows. Necessary for efficient RNA polymerase transcription elongation past template-encoded arresting sites. The arresting sites in DNA have the property of trapping a certain fraction of elongating RNA polymerases that pass through, resulting in locked ternary complexes. Cleavage of the nascent transcript by cleavage factors such as GreA or GreB allows the resumption of elongation from the new 3'terminus. GreA releases sequences of 2 to 3 nucleotides. This is Transcription elongation factor GreA from Bacillus velezensis (strain DSM 23117 / BGSC 10A6 / LMG 26770 / FZB42) (Bacillus amyloliquefaciens subsp. plantarum).